The primary structure comprises 168 residues: Photosystem I assembly protein Ycf3 (168 aa).

TPR repeat units follow at residues 35–68 (AFTYYRDGMSAQSEGNYAEALQNYYEAMRLEIDP), 72–105 (SYILYNIGLIHTSNGEHTKALEYYFRALERNPFL), and 120–153 (GEQAIRQGDSEIAEAWFDQAAEYWKQAIALTPGN).

This sequence belongs to the Ycf3 family.

The protein localises to the plastid. Its subcellular location is the chloroplast thylakoid membrane. In terms of biological role, essential for the assembly of the photosystem I (PSI) complex. May act as a chaperone-like factor to guide the assembly of the PSI subunits. This chain is Photosystem I assembly protein Ycf3, found in Lactuca sativa (Garden lettuce).